Reading from the N-terminus, the 282-residue chain is MLVCNTISEIRAFVREARSKGRSIGFVPTMGYLHEGHLELMRRAKERCDTVVISIFVNPTQFGPNEDYDRYPRDLERDARLAGQVGVDAIFNPSVEEMYPAGYCTYVDVERLTGKLCGLSRPGHFRGVCTVVTKLFNIVKPDYAFFGQKDAQQALVIKRMAADLNMDLEVITVPTVREADGLAMSSRNVYLDPEQRRAALVLSRSLEKAGEAFRAGERDASKLRQMVLDMIKAEPLANIDYVEIYSYPELEPLDQINGPALLALAVKIGQTRLIDNAILGQL.

Residue 30 to 37 (MGYLHEGH) participates in ATP binding. Residue histidine 37 is the Proton donor of the active site. Glutamine 61 provides a ligand contact to (R)-pantoate. A beta-alanine-binding site is contributed by glutamine 61. An ATP-binding site is contributed by 147 to 150 (GQKD). Glutamine 153 provides a ligand contact to (R)-pantoate. Residues valine 176 and 184–187 (MSSR) contribute to the ATP site.

This sequence belongs to the pantothenate synthetase family. Homodimer.

It is found in the cytoplasm. It carries out the reaction (R)-pantoate + beta-alanine + ATP = (R)-pantothenate + AMP + diphosphate + H(+). Its pathway is cofactor biosynthesis; (R)-pantothenate biosynthesis; (R)-pantothenate from (R)-pantoate and beta-alanine: step 1/1. Catalyzes the condensation of pantoate with beta-alanine in an ATP-dependent reaction via a pantoyl-adenylate intermediate. In Pelotomaculum thermopropionicum (strain DSM 13744 / JCM 10971 / SI), this protein is Pantothenate synthetase.